A 1337-amino-acid polypeptide reads, in one-letter code: ABC transporter D family member 1 (1337 aa).

4 consecutive transmembrane segments (helical) span residues 24 to 44 (ILLAAGIVAAGGTAVYLKSRV), 142 to 162 (APLFLRLISENIMLCFMLSTL), 247 to 267 (YASPKYIFWILAYVLGAGTAI), and 342 to 362 (FLLKYLGATVAVILIIEPFFS). Residues 117–395 (VFRTALSNRL…SVIISLFQAL (279 aa)) form the ABC transmembrane type-1 1 domain. In terms of domain architecture, ABC transporter 1 spans 448–695 (VEFSDVKVVT…DAMVVQRAFA (248 aa)). Residue 481-488 (GPNGSGKS) coordinates ATP. The region spanning 751-1049 (LIPTIFDKQG…VVSQSFMAFG (299 aa)) is the ABC transmembrane type-1 2 domain. Residues 900–920 (LLTGQRGVAILYTYMLLGLGF) form a helical membrane-spanning segment. Residues 1091-1337 (LDSQDLLSFS…ELRSIEQTTE (247 aa)) form the ABC transporter 2 domain. Residue 1130–1137 (GPNGSGKT) participates in ATP binding.

This sequence belongs to the ABC transporter superfamily. ABCD family. Peroxisomal fatty acyl CoA transporter (TC 3.A.1.203) subfamily.

It localises to the peroxisome membrane. The protein resides in the glyoxysome membrane. It carries out the reaction an acyl-CoA(out) + ATP + H2O = an acyl-CoA(in) + ADP + phosphate + H(+). Functionally, contributes to the transport of fatty acids and their derivatives (acyl CoAs) across the peroxisomal membrane. Provides acetate to the glyoxylate cycle in developing seedlings. Involved in pollen tube elongation, ovule fertilization, and seeds germination after imbibition (controls the switch between the opposing developmental programs of dormancy and germination), probably by promoting beta-oxidation of storage lipids during gluconeogenesis. Required for biosynthesis of jasmonic acid and conversion of indole butyric acid to indole acetic acid. Confers sensitivity to monofluoroacetic acid (FAc), a toxic acetate analog, and to 2,4-dichlorophenoxybutyric acid (2,4-DB) and indole-3-butyric acid (IBA), two precursors of auxin after beta-oxidation. The polypeptide is ABC transporter D family member 1 (Arabidopsis thaliana (Mouse-ear cress)).